The sequence spans 879 residues: Alanine--tRNA ligase (879 aa).

Zn(2+) is bound by residues H567, H571, C669, and H673.

Belongs to the class-II aminoacyl-tRNA synthetase family. It depends on Zn(2+) as a cofactor.

The protein resides in the cytoplasm. It catalyses the reaction tRNA(Ala) + L-alanine + ATP = L-alanyl-tRNA(Ala) + AMP + diphosphate. Functionally, catalyzes the attachment of alanine to tRNA(Ala) in a two-step reaction: alanine is first activated by ATP to form Ala-AMP and then transferred to the acceptor end of tRNA(Ala). Also edits incorrectly charged Ser-tRNA(Ala) and Gly-tRNA(Ala) via its editing domain. The sequence is that of Alanine--tRNA ligase from Levilactobacillus brevis (strain ATCC 367 / BCRC 12310 / CIP 105137 / JCM 1170 / LMG 11437 / NCIMB 947 / NCTC 947) (Lactobacillus brevis).